Consider the following 295-residue polypeptide: MQPEGAEKGKSFKQRLVLKSSLAKETLSEFLGTFILIVLGCGCVAQAILSRGRFGGVITINVGFSMAVAMAIYVAGGVSGGHINPAVSLAMCLFGRMKWFKLPFYVGAQFLGAFVGAATVFGIYYDGLMSFAGGKLLIVGENATAHIFATYPAPYLSLANAFADQVVATMILLIIVFAIFDSRNLGAPRGLEPIAIGLLIIVIASSLGLNSGCAMNPARDLSPRLFTALAGWGFEVFRAGNNFWWIPVVGPLVGAVIGGLIYVLVIEIHHPEPDSVFKTEQSEDKPEKYELSVIM.

The Cytoplasmic segment spans residues Met-1–Lys-24. The helical transmembrane segment at Glu-25–Cys-43 threads the bilayer. At Val-44–Val-57 the chain is on the extracellular side. Residues Ile-58–Gly-77 traverse the membrane as a helical segment. Topologically, residues Val-78–Ser-79 are cytoplasmic. Residues Gly-80–Cys-92 constitute an intramembrane region (discontinuously helical). The NPA 1 motif lies at Asn-84 to Ala-86. Over Leu-93–Lys-98 the chain is Cytoplasmic. A helical membrane pass occupies residues Trp-99 to Ile-123. Over Tyr-124–Asn-160 the chain is Extracellular. The helical transmembrane segment at Ala-161 to Ala-178 threads the bilayer. Topologically, residues Ile-179–Gly-190 are cytoplasmic. Residues Leu-191 to Leu-207 form a helical membrane-spanning segment. Topologically, residues Gly-208–Asn-210 are extracellular. Positions Ser-211 to Leu-225 form an intramembrane region, discontinuously helical. The NPA 2 motif lies at Asn-216–Ala-218. The Extracellular segment spans residues Phe-226–Phe-243. A helical transmembrane segment spans residues Trp-244–Leu-264. Topologically, residues Val-265 to Met-295 are cytoplasmic.

Belongs to the MIP/aquaporin (TC 1.A.8) family. In terms of assembly, homotetramer; each monomer provides an independent glycerol/water pore. Highly expressed in peripheral leukocytes. Also expressed in liver, lung, and spleen.

Its subcellular location is the cell membrane. It localises to the basolateral cell membrane. It catalyses the reaction glycerol(in) = glycerol(out). The catalysed reaction is H2O(in) = H2O(out). It carries out the reaction urea(in) = urea(out). The enzyme catalyses (S)-lactate(in) = (S)-lactate(out). It catalyses the reaction NH4(+)(in) = NH4(+)(out). The catalysed reaction is uracil(in) = uracil(out). It carries out the reaction adenine(out) = adenine(in). The enzyme catalyses 3-hydroxybutanoate(in) = 3-hydroxybutanoate(out). It catalyses the reaction D-sorbitol(in) = D-sorbitol(out). The catalysed reaction is D-mannitol(in) = D-mannitol(out). It carries out the reaction H2O2(out) = H2O2(in). The enzyme catalyses arsenite(in) = arsenite(out). It catalyses the reaction selenite(in) = selenite(out). Its function is as follows. Aquaglyceroporins form homotetrameric transmembrane channels, with each monomer independently mediating glycerol and water transport across the plasma membrane along their osmotic gradient. AQP9 is the primary route for glycerol uptake in hepatocytes, supporting hepatic gluconeogenesis. It exhibits broad specificity and may transport various small, non-charged solutes, including carbamides, polyols, purines, and pyrimidines. AQP9 may also facilitate hepatic urea extrusion. Due to its permeability to lactate, AQP9 might participate in the astrocyte-to-neuron lactate shuttle, supplying neurons with energy. Additionally, AQP9 is permeable to arsenite, contributing to arsenic excretion by the liver and providing partial protection against arsenic toxicity. It is also permeable to H2O2 in vivo. Could also be permeable to ammonium. The sequence is that of Aquaporin-9 from Homo sapiens (Human).